The following is a 467-amino-acid chain: Interleukin-6 receptor subunit alpha (467 aa).

Positions 1 to 19 (MLAVGCALLTALLAAPGMA) are cleaved as a signal peptide. Residues 20–112 (LAPRGCSKLE…AGSVRLLVDA (93 aa)) form the Ig-like C2-type domain. Over 20–365 (LAPRGCSKLE…VQDSASVPLP (346 aa)) the chain is Extracellular. 4 disulfide bridges follow: C25–C193, C47–C96, C121–C132, and C165–C176. Residues N55 and N93 are each glycosylated (N-linked (GlcNAc...) asparagine). 2 consecutive Fibronectin type-III domains span residues 113–217 (PPEE…LQPD) and 218–316 (PPVN…IPWT). 2 N-linked (GlcNAc...) asparagine glycosylation sites follow: N221 and N245. The WSXWS motif signature appears at 303-307 (WSEWS). Positions 315 to 357 (WTESRSSPAETELPLSTQAPTTNEDDEDISSKESANATSLPVQ) are disordered. Composition is skewed to polar residues over residues 317–336 (ESRS…APTT) and 346–357 (KESANATSLPVQ). N-linked (GlcNAc...) asparagine glycosylation is present at N350. A glycan (O-linked (GlcNAc) threonine) is linked at T352. A helical transmembrane segment spans residues 366 to 386 (TFLVAGGSLAFGTLLCIGIIL). The Cytoplasmic segment spans residues 387–467 (RFKKTGQLQA…VSNRDYFFPR (81 aa)). Positions 428-467 (ISPPVSPNSLGDNTSRNSRPEARGPQSPYDVSNRDYFFPR) are disordered.

This sequence belongs to the type I cytokine receptor family. Type 3 subfamily. In terms of assembly, component of a hexamer of two molecules each of IL6, IL6R and IL6ST; first binds to IL6 to associate with the signaling subunit IL6ST. Interacts (via N-terminal ectodomain) with SORL1; this interaction may affect IL6-binding to IL6R, hence decrease IL6 'classic-signaling'. Also interacts with SORL1; this interaction leads to soluble IL6R internalization. May form a trimeric complex with the soluble SORL1 ectodomain and circulating IL6 receptor; this interaction might stabilize circulating IL6, hence promote IL6 'trans-signaling'. Post-translationally, a short soluble form is also released from the membrane by proteolysis. The sIL6R is formed by limited proteolysis of membrane-bound receptors, a process referred to as ectodomain shedding. mIL6R is cleaved by the proteases ADAM10 and ADAM17. Glycosylated. Glycosylation is dispensable for transport, signaling, and cell-surface turnover. Glycosylation at Asn-55 is a protease-regulatory exosite. Glycosylation is required for ADAM17-mediated proteolysis. In terms of tissue distribution, expressed in liver.

It is found in the cell membrane. It localises to the secreted. With respect to regulation, classic and trans-signaling are both inhibited by tocilizumab, a humanized monoclonal antibody that blocks interleukin IL6R signaling. In terms of biological role, part of the receptor for interleukin 6. Binds to IL6 with low affinity, but does not transduce a signal. Signal activation necessitate an association with IL6ST. Activation leads to the regulation of the immune response, acute-phase reactions and hematopoiesis. The interaction with membrane-bound IL6R and IL6ST stimulates 'classic signaling', the restricted expression of the IL6R limits classic IL6 signaling to only a few tissues such as the liver and some cells of the immune system. Whereas the binding of IL6 and soluble IL6R to IL6ST stimulates 'trans-signaling'. Alternatively, 'cluster signaling' occurs when membrane-bound IL6:IL6R complexes on transmitter cells activate IL6ST receptors on neighboring receiver cells. Signaling via the membrane-bound IL6R is mostly regenerative and anti-inflammatory. Drives naive CD4(+) T cells to the Th17 lineage, through 'cluster signaling' by dendritic cells. Its function is as follows. Soluble form of IL6 receptor (sIL6R) that acts as an agonist of IL6 activity. The IL6:sIL6R complex (hyper-IL6) binds to IL6ST/gp130 on cell surfaces and induces signaling also on cells that do not express membrane-bound IL6R in a process called IL6 'trans-signaling'. sIL6R is causative for the pro-inflammatory properties of IL6 and an important player in the development of chronic inflammatory diseases. In complex with IL6, is required for induction of VEGF production. Plays a protective role during liver injury, being required for maintenance of tissue regeneration. 'Trans-signaling' in central nervous system regulates energy and glucose homeostasis. The sequence is that of Interleukin-6 receptor subunit alpha (IL6R) from Sus scrofa (Pig).